The primary structure comprises 388 residues: Probable peptidoglycan glycosyltransferase FtsW (388 aa).

Helical transmembrane passes span 16 to 36 (LVLI…SSSV), 54 to 74 (VFAL…PSQS), 82 to 102 (WFLL…EIGG), 109 to 129 (LVVM…LFLA), 144 to 164 (TAVI…LLQP), 167 to 187 (GTTV…GAPF), 189 to 209 (YFVI…INSP), 233 to 253 (SQAL…GASV), 277 to 297 (WLGV…MFAV), 310 to 330 (ALVV…NVGV), and 342 to 362 (LPFV…IGLV).

It belongs to the SEDS family. FtsW subfamily.

Its subcellular location is the cell inner membrane. The catalysed reaction is [GlcNAc-(1-&gt;4)-Mur2Ac(oyl-L-Ala-gamma-D-Glu-L-Lys-D-Ala-D-Ala)](n)-di-trans,octa-cis-undecaprenyl diphosphate + beta-D-GlcNAc-(1-&gt;4)-Mur2Ac(oyl-L-Ala-gamma-D-Glu-L-Lys-D-Ala-D-Ala)-di-trans,octa-cis-undecaprenyl diphosphate = [GlcNAc-(1-&gt;4)-Mur2Ac(oyl-L-Ala-gamma-D-Glu-L-Lys-D-Ala-D-Ala)](n+1)-di-trans,octa-cis-undecaprenyl diphosphate + di-trans,octa-cis-undecaprenyl diphosphate + H(+). It functions in the pathway cell wall biogenesis; peptidoglycan biosynthesis. In terms of biological role, peptidoglycan polymerase that is essential for cell division. This chain is Probable peptidoglycan glycosyltransferase FtsW, found in Thiomicrospira cyclica (strain DSM 14477 / JCM 11371 / ALM1) (Thioalkalimicrobium cyclicum).